Consider the following 562-residue polypeptide: Formate--tetrahydrofolate ligase (562 aa).

ATP is bound at residue Thr-70–Ser-77.

This sequence belongs to the formate--tetrahydrofolate ligase family.

It catalyses the reaction (6S)-5,6,7,8-tetrahydrofolate + formate + ATP = (6R)-10-formyltetrahydrofolate + ADP + phosphate. It functions in the pathway one-carbon metabolism; tetrahydrofolate interconversion. The polypeptide is Formate--tetrahydrofolate ligase (Paenarthrobacter aurescens (strain TC1)).